We begin with the raw amino-acid sequence, 1257 residues long: Probable aldehyde oxidase gad-3 (1257 aa).

The 88-residue stretch at 4–91 (TGIFFNVNGK…KTFVITVEGV (88 aa)) folds into the 2Fe-2S ferredoxin-type domain. [2Fe-2S] cluster is bound by residues C43, C48, C51, and C73. The region spanning 229–459 (LKGDRIELLL…TSLEVHIDAL (231 aa)) is the FAD-binding PCMH-type domain. E1208 acts as the Proton acceptor in catalysis.

Belongs to the xanthine dehydrogenase family. [2Fe-2S] cluster is required as a cofactor. It depends on FAD as a cofactor. Mo-molybdopterin serves as cofactor.

It carries out the reaction an aldehyde + O2 + H2O = a carboxylate + H2O2 + H(+). Its function is as follows. May be involved in the metabolism of 1-methylnicotinamide (MNA). Linked to regulation of longevity through generation of reactive oxygen species, where it probably functions in a pathway downstream of the sirtuin sir-2.1 and the nicotinamide N-methyltransferase anmt-1. This Caenorhabditis elegans protein is Probable aldehyde oxidase gad-3.